The primary structure comprises 773 residues: Endonuclease MutS2 (773 aa).

Residue 334–341 (GANAGGKT) coordinates ATP. The Smr domain maps to 698 to 773 (VDLRGMRADV…GDGMTMVTLK (76 aa)).

Belongs to the DNA mismatch repair MutS family. MutS2 subfamily. Homodimer. Binds to stalled ribosomes, contacting rRNA.

Endonuclease that is involved in the suppression of homologous recombination and thus may have a key role in the control of bacterial genetic diversity. In terms of biological role, acts as a ribosome collision sensor, splitting the ribosome into its 2 subunits. Detects stalled/collided 70S ribosomes which it binds and splits by an ATP-hydrolysis driven conformational change. Acts upstream of the ribosome quality control system (RQC), a ribosome-associated complex that mediates the extraction of incompletely synthesized nascent chains from stalled ribosomes and their subsequent degradation. Probably generates substrates for RQC. The protein is Endonuclease MutS2 of Solidesulfovibrio magneticus (strain ATCC 700980 / DSM 13731 / RS-1) (Desulfovibrio magneticus).